A 345-amino-acid polypeptide reads, in one-letter code: MENTLGLEIIEVVEQAAIASAKWMGKGEKNTADQVAVEAMRERMNKIYMRGRIVIGEGERDDAPMLYIGEEVGICTQPNADQLCNPDELVEIDIAVDPCEGTNLVAYGQPGSMAVLAISEKGGLFAAPDFYMKKLAAPPAAKGKVDINKSATENLKILSECLDRSIDELVVVVMKRDRHQGLIKEIRDAGARVQLISDGDVGAAISCGFAGTNVHALMGIGAAPEGVISAAAMRALGGHFQGQLIYDPEVVKTGLIGESKQANLDRLSSMGINDPDKVYDAHELASGENVLFAGCGITSGNLMQGVRFFHGGARTQSLVISSQSQTARFVDTIHMAGQPKTVQLH.

Aspartate 33, glutamate 57, aspartate 97, and glutamate 100 together coordinate Mn(2+). Substrate contacts are provided by residues 100–102 (EGT), tyrosine 131, 176–178 (RDR), and 198–200 (DGD). Glutamate 225 is a Mn(2+) binding site.

It belongs to the FBPase class 2 family. In terms of assembly, homotetramer. The cofactor is Mn(2+).

The enzyme catalyses beta-D-fructose 1,6-bisphosphate + H2O = beta-D-fructose 6-phosphate + phosphate. It carries out the reaction D-sedoheptulose 1,7-bisphosphate + H2O = D-sedoheptulose 7-phosphate + phosphate. Its pathway is carbohydrate biosynthesis; Calvin cycle. Catalyzes the hydrolysis of fructose 1,6-bisphosphate (Fru 1,6-P2) and sedoheptulose 1,7-bisphosphate (Sed 1,7-P2) to fructose 6-phosphate and sedoheptulose 7-phosphate, respectively. This Nostoc sp. (strain PCC 7120 / SAG 25.82 / UTEX 2576) protein is D-fructose 1,6-bisphosphatase class 2/sedoheptulose 1,7-bisphosphatase.